The primary structure comprises 389 residues: Multidrug resistance protein 1 (389 aa).

11 helical membrane-spanning segments follow: residues 6 to 26, 42 to 62, 71 to 91, 102 to 122, 134 to 154, 160 to 180, 202 to 222, 243 to 263, 286 to 306, 336 to 356, and 358 to 378; these read ITLT…GLVI, AVGY…PIAG, KIMI…FGIG, MLGG…IADI, YMSA…GFLA, LPFF…ILTL, IFAP…FGLA, IAIM…VLFD, VFLL…VTVF, SMFT…LFDI, and VNYP…LTIA.

It belongs to the major facilitator superfamily. TCR/Tet family.

It is found in the cell membrane. Functionally, energy-dependent efflux pump responsible for decreased drug accumulation in multi-drug-resistant cells. Probably uses a transmembrane proton gradient as the energy source. Causes the efflux of a variety of toxic substances, including such structurally diverse compounds as ethidium bromide, rhodamine and acridine dyes, tetraphenylphosphonium, puromycin, chloramphenicol, doxorubicin, and fluoroquinolone antibiotics. The polypeptide is Multidrug resistance protein 1 (bmr) (Bacillus subtilis (strain 168)).